The sequence spans 274 residues: Dermonecrotic toxin SaSicTox-betaIIB1 (274 aa).

H5 is a catalytic residue. Mg(2+)-binding residues include E25 and D27. The active-site Nucleophile is the H41. Intrachain disulfides connect C45–C51 and C47–C190. D85 provides a ligand contact to Mg(2+).

Belongs to the arthropod phospholipase D family. Class II subfamily. Mg(2+) is required as a cofactor. Expressed by the venom gland.

The protein resides in the secreted. It carries out the reaction an N-(acyl)-sphingosylphosphocholine = an N-(acyl)-sphingosyl-1,3-cyclic phosphate + choline. It catalyses the reaction an N-(acyl)-sphingosylphosphoethanolamine = an N-(acyl)-sphingosyl-1,3-cyclic phosphate + ethanolamine. The catalysed reaction is a 1-acyl-sn-glycero-3-phosphocholine = a 1-acyl-sn-glycero-2,3-cyclic phosphate + choline. The enzyme catalyses a 1-acyl-sn-glycero-3-phosphoethanolamine = a 1-acyl-sn-glycero-2,3-cyclic phosphate + ethanolamine. In terms of biological role, dermonecrotic toxins cleave the phosphodiester linkage between the phosphate and headgroup of certain phospholipids (sphingolipid and lysolipid substrates), forming an alcohol (often choline) and a cyclic phosphate. This toxin acts on sphingomyelin (SM). It may also act on ceramide phosphoethanolamine (CPE), lysophosphatidylcholine (LPC) and lysophosphatidylethanolamine (LPE), but not on lysophosphatidylserine (LPS), and lysophosphatidylglycerol (LPG). It acts by transphosphatidylation, releasing exclusively cyclic phosphate products as second products. Induces dermonecrosis, hemolysis, increased vascular permeability, edema, inflammatory response, and platelet aggregation. This is Dermonecrotic toxin SaSicTox-betaIIB1 from Sicarius albospinosus (Six-eyed crab spider).